The following is a 244-amino-acid chain: Cell division protein ZipA (244 aa).

At 1-4 (MSDM) the chain is on the periplasmic side. Residues 5–25 (AMIRIGILIAGLLLVAAIFLF) traverse the membrane as a helical segment. Residues 26 to 244 (GRPKKSPQGR…APPLTKSPRW (219 aa)) are Cytoplasmic-facing. Residues 30–91 (KSPQGRRVDK…GAGGNDVGKR (62 aa)) form a disordered region. The span at 35–50 (RRVDKDDTQPRERREP) shows a compositional bias: basic and acidic residues.

It belongs to the ZipA family. In terms of assembly, interacts with FtsZ via their C-terminal domains.

It is found in the cell inner membrane. Its function is as follows. Essential cell division protein that stabilizes the FtsZ protofilaments by cross-linking them and that serves as a cytoplasmic membrane anchor for the Z ring. Also required for the recruitment to the septal ring of downstream cell division proteins. In Xanthomonas campestris pv. campestris (strain ATCC 33913 / DSM 3586 / NCPPB 528 / LMG 568 / P 25), this protein is Cell division protein ZipA.